A 76-amino-acid chain; its full sequence is Brevinin-2ISb (76 aa).

An N-terminal signal peptide occupies residues 1–22 (MFTMKKSLLVLFFLGTISLSLC). The propeptide at 23–41 (QEERNADEEDGGEATEEEV) is removed in mature form. An intrachain disulfide couples Cys-70 to Cys-76.

As to expression, expressed by the skin glands.

The protein resides in the secreted. Has antimicrobial activity against Gram-negative bacterium E.coli ATCC 8739 (MIC=12.5 ug), against Gram positive bacteria S.aureus ATCC 6538 (MIC=6.3 ug) and B.subtilis ATCC 6633 (MIC=25 ug). Has no activity against methicillin-resistant S.aureus ATCC 43300 (MIC= ug) and fungus C.albicans ATCC 90028. This Odorrana ishikawae (Ishikawa's frog) protein is Brevinin-2ISb.